The sequence spans 434 residues: Histidinol dehydrogenase (434 aa).

Residues tyrosine 130, glutamine 188, and asparagine 211 each coordinate NAD(+). Residues serine 237, glutamine 259, and histidine 262 each coordinate substrate. Glutamine 259 and histidine 262 together coordinate Zn(2+). Residues glutamate 326 and histidine 327 each act as proton acceptor in the active site. Positions 327, 360, 414, and 419 each coordinate substrate. Aspartate 360 provides a ligand contact to Zn(2+). Residue histidine 419 participates in Zn(2+) binding.

This sequence belongs to the histidinol dehydrogenase family. As to quaternary structure, homodimer. The cofactor is Zn(2+).

The enzyme catalyses L-histidinol + 2 NAD(+) + H2O = L-histidine + 2 NADH + 3 H(+). Its pathway is amino-acid biosynthesis; L-histidine biosynthesis; L-histidine from 5-phospho-alpha-D-ribose 1-diphosphate: step 9/9. Functionally, catalyzes the sequential NAD-dependent oxidations of L-histidinol to L-histidinaldehyde and then to L-histidine. The polypeptide is Histidinol dehydrogenase (Escherichia coli (strain K12)).